A 60-amino-acid chain; its full sequence is UPF0337 protein SACOL1680 (60 aa).

Belongs to the UPF0337 (CsbD) family.

The sequence is that of UPF0337 protein SACOL1680 from Staphylococcus aureus (strain COL).